Here is a 93-residue protein sequence, read N- to C-terminus: Ribonuclease P protein component 1 (93 aa).

The protein belongs to the eukaryotic/archaeal RNase P protein component 1 family. In terms of assembly, consists of a catalytic RNA component and at least 4-5 protein subunits.

The protein localises to the cytoplasm. It carries out the reaction Endonucleolytic cleavage of RNA, removing 5'-extranucleotides from tRNA precursor.. Part of ribonuclease P, a protein complex that generates mature tRNA molecules by cleaving their 5'-ends. This is Ribonuclease P protein component 1 from Methanothermobacter thermautotrophicus (strain ATCC 29096 / DSM 1053 / JCM 10044 / NBRC 100330 / Delta H) (Methanobacterium thermoautotrophicum).